Consider the following 159-residue polypeptide: LOB domain-containing protein 25 (159 aa).

The region spanning 38 to 139 is the LOB domain; that stretch reads SPCAACKFLR…RELEETNADL (102 aa).

This sequence belongs to the LOB domain-containing protein family. As to expression, expressed in young shoots, roots, stems, leaves and flowers.

This is LOB domain-containing protein 25 (LBD25) from Arabidopsis thaliana (Mouse-ear cress).